We begin with the raw amino-acid sequence, 124 residues long: Small ribosomal subunit protein uS13 (124 aa).

The interval 91 to 124 is disordered; that stretch reads HRKGLPVNGQNTRNNARTRKGKPKAVTGKKQAGK.

This sequence belongs to the universal ribosomal protein uS13 family. As to quaternary structure, part of the 30S ribosomal subunit. Forms a loose heterodimer with protein S19. Forms two bridges to the 50S subunit in the 70S ribosome.

Located at the top of the head of the 30S subunit, it contacts several helices of the 16S rRNA. In the 70S ribosome it contacts the 23S rRNA (bridge B1a) and protein L5 of the 50S subunit (bridge B1b), connecting the 2 subunits; these bridges are implicated in subunit movement. Contacts the tRNAs in the A and P-sites. The polypeptide is Small ribosomal subunit protein uS13 (Acholeplasma laidlawii (strain PG-8A)).